The chain runs to 262 residues: Putative hydro-lyase BLi00500/BL02808 (262 aa).

It belongs to the D-glutamate cyclase family.

The chain is Putative hydro-lyase BLi00500/BL02808 from Bacillus licheniformis (strain ATCC 14580 / DSM 13 / JCM 2505 / CCUG 7422 / NBRC 12200 / NCIMB 9375 / NCTC 10341 / NRRL NRS-1264 / Gibson 46).